The following is a 231-amino-acid chain: Thymidylate kinase (231 aa).

ATP is bound at residue 10–17 (GGEGAGKT).

The protein belongs to the thymidylate kinase family.

It catalyses the reaction dTMP + ATP = dTDP + ADP. Phosphorylation of dTMP to form dTDP in both de novo and salvage pathways of dTTP synthesis. The polypeptide is Thymidylate kinase (Acaryochloris marina (strain MBIC 11017)).